A 268-amino-acid polypeptide reads, in one-letter code: Tropinone reductase homolog At2g29370 (268 aa).

Residue 22 to 46 participates in NADP(+) binding; the sequence is LVTGGSKGLGKAVVEELAMLGARVH. Serine 155 provides a ligand contact to substrate. Tyrosine 168 (proton acceptor) is an active-site residue.

This sequence belongs to the short-chain dehydrogenases/reductases (SDR) family. SDR65C subfamily.

This is Tropinone reductase homolog At2g29370 from Arabidopsis thaliana (Mouse-ear cress).